The sequence spans 253 residues: Imidazole glycerol phosphate synthase subunit HisF (253 aa).

Catalysis depends on residues D11 and D130.

It belongs to the HisA/HisF family. In terms of assembly, heterodimer of HisH and HisF.

It localises to the cytoplasm. The enzyme catalyses 5-[(5-phospho-1-deoxy-D-ribulos-1-ylimino)methylamino]-1-(5-phospho-beta-D-ribosyl)imidazole-4-carboxamide + L-glutamine = D-erythro-1-(imidazol-4-yl)glycerol 3-phosphate + 5-amino-1-(5-phospho-beta-D-ribosyl)imidazole-4-carboxamide + L-glutamate + H(+). It functions in the pathway amino-acid biosynthesis; L-histidine biosynthesis; L-histidine from 5-phospho-alpha-D-ribose 1-diphosphate: step 5/9. In terms of biological role, IGPS catalyzes the conversion of PRFAR and glutamine to IGP, AICAR and glutamate. The HisF subunit catalyzes the cyclization activity that produces IGP and AICAR from PRFAR using the ammonia provided by the HisH subunit. The protein is Imidazole glycerol phosphate synthase subunit HisF of Clostridium botulinum (strain Kyoto / Type A2).